We begin with the raw amino-acid sequence, 294 residues long: 1,4-dihydroxy-2-naphthoate octaprenyltransferase (294 aa).

Helical transmembrane passes span 35–55 (SAVW…VIGV), 103–123 (AGLA…ATCI), 140–160 (GFGE…GTEY), 166–186 (VDWV…SVLV), 220–240 (LLVA…WCAV), and 272–292 (GLAM…AGSV).

The protein belongs to the MenA family. Type 1 subfamily.

It is found in the cell membrane. The catalysed reaction is an all-trans-polyprenyl diphosphate + 1,4-dihydroxy-2-naphthoate + H(+) = a 2-demethylmenaquinol + CO2 + diphosphate. Its pathway is quinol/quinone metabolism; menaquinone biosynthesis; menaquinol from 1,4-dihydroxy-2-naphthoate: step 1/2. Its function is as follows. Conversion of 1,4-dihydroxy-2-naphthoate (DHNA) to demethylmenaquinone (DMK). This Mycobacterium leprae (strain TN) protein is 1,4-dihydroxy-2-naphthoate octaprenyltransferase.